The following is a 103-amino-acid chain: Large ribosomal subunit protein bL21 (103 aa).

It belongs to the bacterial ribosomal protein bL21 family. Part of the 50S ribosomal subunit. Contacts protein L20.

Its function is as follows. This protein binds to 23S rRNA in the presence of protein L20. This Haemophilus ducreyi (strain 35000HP / ATCC 700724) protein is Large ribosomal subunit protein bL21.